The primary structure comprises 296 residues: Transcription repressor OFP3 (296 aa).

Disordered regions lie at residues 27 to 115 (MSRS…SANA) and 131 to 196 (PSDQ…AHSS). The span at 60–69 (LSSTAHHPQA) shows a compositional bias: polar residues. Residues 78-88 (SFKRKIKRKTV) are compositionally biased toward basic residues. A compositionally biased stretch (low complexity) spans 92 to 115 (SSRLKLSTSSSLNHRSKSSSSANA). The span at 136-159 (FVHDPEPHSSIDIKDELSVRKLDD) shows a compositional bias: basic and acidic residues. The OVATE domain maps to 228–287 (IVLSSVDPEKDFRESMVEMIMENKMREQKDLEDLLACYLSLNSSEYHDVIIKAFENTWLH).

As to quaternary structure, interacts with BLH1, BLH3, KNAT5 and KNAT7.

It localises to the nucleus. Functionally, transcriptional repressor that may regulate multiple aspects of plant growth and development through the regulation of BEL1-LIKE (BLH) and KNOX TALE (KNAT) homeodomain transcription factors. The polypeptide is Transcription repressor OFP3 (OFP3) (Arabidopsis thaliana (Mouse-ear cress)).